The following is a 514-amino-acid chain: FAD-dependent monooxygenase CPUR_05423 (514 aa).

Residues V79 and R146 each coordinate FAD. The active site involves R227. Residues D358 and G371 each contribute to the FAD site.

The protein belongs to the paxM FAD-dependent monooxygenase family. Requires FAD as cofactor.

Its pathway is pigment biosynthesis. FAD-dependent monooxygenase; part of the ergochrome gene cluster responsible for the typical purple-black color of the ergot sclerotia. The ergochrome gene cluster produces several ergot pigments including the yellow ergochrome secalonic acid and its derivatives, as well as the red anthraquinones endocrocin and clavorubin. The pathway begins with the synthesis of atrochrysone thioester by the polyketide synthase (PKS) CPUR_05437. The atrochrysone carboxyl ACP thioesterase CPUR_05436 then breaks the thioester bond and releases the atrochrysone carboxylic acid from CPUR_05437. The atrochrysone carboxylic acid is then converted to atrochrysone which is further transformed into emodin anthrone. The next step is performed by the anthrone oxygenase CPUR_05434 that catalyzes the oxidation of emodinanthrone to emodin. Emodin is further modified to yield monodictyphenone via several steps involving CPUR_05427, CPUR_05428, CPUR_05429 and CPUR_05430. The short chain dehydrogenase/reductase CPUR_05418 then catalyzes the C-5 ketoreduction to give the xanthone skeleton of the monomeric units. Ergochromes formation requires further dimerization steps of different xanthone units, probably catalyzed by the cytochrome P450 monooxygenase CPUR_05419. CPUR_05425, CPUR_05426 and CPUR_05431 are unique to Claviceps, thus it is likely that they are involved in further modification of xanthone units or in their dimerization. The yellow ergochromes and the red anthraquinone pigments endocrocin and clavorubin are products from the same PKS derived precursors and the latter are likely shunt products in the pathway of xanthone biosynthesis. It is proposed that atrochrysone carboxylic acid released from the PKS CPUR_05437 can also be converted to endocrocin anthrone which is further oxidized into endocrocin by CPUR_05435. Endocrocin could be then modified to clavorubin, possibly by CPUR_05423 and CPUR_05431. Clavorubin is the principal anthraquinone metabolite produced by the cluster with a much higher yield compared to endocrocin. In Claviceps purpurea (strain 20.1) (Ergot fungus), this protein is FAD-dependent monooxygenase CPUR_05423.